The following is a 333-amino-acid chain: Glyceraldehyde-3-phosphate dehydrogenase (333 aa).

Ser-1 carries the N-acetylserine modification. Residues 10–11 (RI), Asp-31, and Met-76 each bind NAD(+). D-glyceraldehyde 3-phosphate contacts are provided by residues 147–149 (SCT), Thr-178, 207–208 (TG), and Arg-230. The active-site Nucleophile is the Cys-148. Asn-312 contributes to the NAD(+) binding site.

Belongs to the glyceraldehyde-3-phosphate dehydrogenase family. In terms of assembly, homotetramer.

The protein localises to the cytoplasm. It catalyses the reaction D-glyceraldehyde 3-phosphate + phosphate + NAD(+) = (2R)-3-phospho-glyceroyl phosphate + NADH + H(+). Its pathway is carbohydrate degradation; glycolysis; pyruvate from D-glyceraldehyde 3-phosphate: step 1/5. This Panulirus versicolor (Painted spiny lobster) protein is Glyceraldehyde-3-phosphate dehydrogenase.